The chain runs to 353 residues: Methionine import ATP-binding protein MetN (353 aa).

Positions 8-249 (LDQIDVTFHQ…PKQPLTQDFI (242 aa)) constitute an ABC transporter domain. 42 to 49 (GYSGAGKS) contacts ATP.

This sequence belongs to the ABC transporter superfamily. Methionine importer (TC 3.A.1.24) family. As to quaternary structure, the complex is composed of two ATP-binding proteins (MetN), two transmembrane proteins (MetI) and a solute-binding protein (MetQ).

It is found in the cell membrane. The catalysed reaction is L-methionine(out) + ATP + H2O = L-methionine(in) + ADP + phosphate + H(+). The enzyme catalyses D-methionine(out) + ATP + H2O = D-methionine(in) + ADP + phosphate + H(+). Functionally, part of the ABC transporter complex MetNIQ involved in methionine import. Responsible for energy coupling to the transport system. The protein is Methionine import ATP-binding protein MetN of Streptococcus pneumoniae serotype 4 (strain ATCC BAA-334 / TIGR4).